We begin with the raw amino-acid sequence, 355 residues long: Protein AMBP (355 aa).

Cys-55 and Lys-138 together coordinate 3-hydroxy-L-kynurenine. The cysteines at positions 92 and 189 are disulfide-linked. The N-linked (GlcNAc...) asparagine glycan is linked to Asn-145. Lys-150 is a binding site for 3-hydroxy-L-kynurenine. Residues Asn-231 and Asn-255 are each glycosylated (N-linked (GlcNAc...) asparagine). 6 cysteine pairs are disulfide-bonded: Cys-236-Cys-286, Cys-245-Cys-269, Cys-261-Cys-282, Cys-292-Cys-342, Cys-301-Cys-325, and Cys-317-Cys-338. 2 consecutive BPTI/Kunitz inhibitor domains span residues 236 to 286 and 292 to 342; these read CKAA…LQRC and CRLP…QEYC.

The protein in the N-terminal section; belongs to the calycin superfamily. Lipocalin family. In terms of assembly, I-alpha-I plasma protease inhibitors are assembled from one or two heavy chains (H1, H2 or H3) and one light chain, bikunin. Inter-alpha-inhibitor (I-alpha-I) is composed of H1, H2 and bikunin, inter-alpha-like inhibitor (I-alpha-LI) of H2 and bikunin, and pre-alpha-inhibitor (P-alpha-I) of H3 and bikunin. In terms of processing, the precursor is proteolytically processed into two separately functioning proteins. 3-hydroxykynurenine, an oxidized tryptophan metabolite that is common in biological fluids, reacts with Cys-55, Lys-138, and Lys-150 to form heterogeneous polycyclic chromophores including hydroxanthommatin. The reaction by alpha-1-microglobulin is autocatalytic. The chromophore can react with accessible cysteines forming non-reducible thioether cross-links with other molecules of alpha-1-microglobulin or with other proteins. In terms of tissue distribution, expressed by the liver and secreted in plasma.

The protein resides in the secreted. This is Protein AMBP from Pleuronectes platessa (European plaice).